The sequence spans 152 residues: Aspartate carbamoyltransferase regulatory chain (152 aa).

Positions 108, 113, 137, and 140 each coordinate Zn(2+).

The protein belongs to the PyrI family. In terms of assembly, contains catalytic and regulatory chains. It depends on Zn(2+) as a cofactor.

In terms of biological role, involved in allosteric regulation of aspartate carbamoyltransferase. The polypeptide is Aspartate carbamoyltransferase regulatory chain (Neisseria meningitidis serogroup A / serotype 4A (strain DSM 15465 / Z2491)).